The chain runs to 325 residues: Ribosomal RNA small subunit methyltransferase H (325 aa).

Residues 45–47, Asp65, Tyr92, Asp113, and Gln120 contribute to the S-adenosyl-L-methionine site; that span reads GGH.

Belongs to the methyltransferase superfamily. RsmH family.

The protein localises to the cytoplasm. The enzyme catalyses cytidine(1402) in 16S rRNA + S-adenosyl-L-methionine = N(4)-methylcytidine(1402) in 16S rRNA + S-adenosyl-L-homocysteine + H(+). Specifically methylates the N4 position of cytidine in position 1402 (C1402) of 16S rRNA. In Oleidesulfovibrio alaskensis (strain ATCC BAA-1058 / DSM 17464 / G20) (Desulfovibrio alaskensis), this protein is Ribosomal RNA small subunit methyltransferase H.